The following is a 791-amino-acid chain: MPLPGGLWWLLCCRRGFTLLHRDYGDGELSGDGDEDEDDETFELRSPSPAGGGRGSLDVTLTQPTRNGPITDRLQSWEETWSLIPDKGLPEDDPDVIVKGWLYREPRGGGARPWLLPRRAWFVLTRDSLDQFSSSGKGARRLGSLVLTSLCSVTGPERRPKETGLWSVTVSGRKHSIRLCSPRQAEAERWGVALREVIASKAPLETPTQLLLRDIQESGGDPEAVALIYRRNPILRHTSSALYAPLLPLPYEVSAPGPGYAPLREEAVRLFLALQALEGARRPGPLMQGVLQTCRDLPALQDELFLQLAKQTSGPAGPPGLPATQDPAALRYWQLLTCMSCTFRPGGAVRGHLLGHLERTEQALPDSELAEYARFIRKALGRTRGRELVPSLAEISALSRRQELLCTVHCPGAGACPVSIDSHTTAGEVARELVGRLGLARSRNAFALYEQRGAQERALAGGTLVADVLTSLTSEEVGLEDSPDSGWRLCLRLHGPLHPEGLSPEGHELPFLFEQAHALLLRGRPPPPDDTLRALAALRLQSLHRDFSPRGPLPLLDRLMPPPAPPREQPSRPARRPPPSAALLAGALWSPGLAKRRAERARRIGTGRSTESTAQVGGGGGGSTTAAVLGGWKRLRGMGQAEAMAAYLALAAQCPGFGAARYDVLELSTEPGGGAPQKLCLGLGAKAMSLSRPGESEPIHSVSYGHVAACQLIGPHTLALRVGDSQLLLQSPQVEEIMELVNAYLANPSPERPCSSSGPPSQDLSDTSPPSQHQVLEKPQGQSGCLRQLQD.

Positions 1 to 18 are cleaved as a signal peptide; sequence MPLPGGLWWLLCCRRGFT. The segment covering 29 to 41 has biased composition (acidic residues); the sequence is LSGDGDEDEDDET. The segment at 29-71 is disordered; it reads LSGDGDEDEDDETFELRSPSPAGGGRGSLDVTLTQPTRNGPIT. S30 bears the Phosphoserine mark. Positions 59 to 71 are enriched in polar residues; it reads VTLTQPTRNGPIT. One can recognise a PH domain in the interval 95–199; it reads DVIVKGWLYR…WGVALREVIA (105 aa). A MyTH4 domain is found at 237–399; sequence HTSSALYAPL…PSLAEISALS (163 aa). Positions 404–755 constitute an FERM domain; it reads LLCTVHCPGA…ANPSPERPCS (352 aa). The segment covering 549 to 559 has biased composition (low complexity); the sequence is PRGPLPLLDRL. Disordered stretches follow at residues 549-580 and 593-623; these read PRGP…PPPS and LAKR…GGGS. The segment covering 594–605 has biased composition (basic residues); that stretch reads AKRRAERARRIG. The residue at position 636 (R636) is an Omega-N-methylarginine. The interval 748–791 is disordered; that stretch reads PSPERPCSSSGPPSQDLSDTSPPSQHQVLEKPQGQSGCLRQLQD. A compositionally biased stretch (polar residues) spans 754–791; sequence CSSSGPPSQDLSDTSPPSQHQVLEKPQGQSGCLRQLQD.

The polypeptide is Pleckstrin homology domain-containing family H member 3 (Plekhh3) (Rattus norvegicus (Rat)).